Consider the following 254-residue polypeptide: 3-dehydroquinate dehydratase (254 aa).

3-dehydroquinate contacts are provided by residues E47–R49 and R83. H144 acts as the Proton donor/acceptor in catalysis. K171 (schiff-base intermediate with substrate) is an active-site residue. 3 residues coordinate 3-dehydroquinate: R213, S232, and Q236.

The protein belongs to the type-I 3-dehydroquinase family. As to quaternary structure, homodimer.

It catalyses the reaction 3-dehydroquinate = 3-dehydroshikimate + H2O. It functions in the pathway metabolic intermediate biosynthesis; chorismate biosynthesis; chorismate from D-erythrose 4-phosphate and phosphoenolpyruvate: step 3/7. Functionally, involved in the third step of the chorismate pathway, which leads to the biosynthesis of aromatic amino acids. Catalyzes the cis-dehydration of 3-dehydroquinate (DHQ) and introduces the first double bond of the aromatic ring to yield 3-dehydroshikimate. The polypeptide is 3-dehydroquinate dehydratase (Neisseria meningitidis serogroup B (strain ATCC BAA-335 / MC58)).